Reading from the N-terminus, the 259-residue chain is Synaptophysin-like protein 1 (259 aa).

Residues 1-33 (MAPNIYLVRQRISRLGQRMSGFQINLNPLKEPL) lie on the Cytoplasmic side of the membrane. The 210-residue stretch at 28–237 (PLKEPLGFIK…NAWFVYKETS (210 aa)) folds into the MARVEL domain. A helical transmembrane segment spans residues 34 to 54 (GFIKVLEWIASIFAFATCGGF). The Vesicular segment spans residues 55–116 (KGQTEIQVNC…LIGDYSSSAQ (62 aa)). N-linked (GlcNAc...) asparagine glycosylation is present at Asn-71. A helical transmembrane segment spans residues 117–137 (FYVTFAVFVFLYCIAALLLYV). Topologically, residues 138 to 150 (GYTSLYLDSRKLP) are cytoplasmic. A helical transmembrane segment spans residues 151 to 171 (MIDFVVTLVATFLWLVSTSAW). Residues 172–212 (AKALTDIKIATGHNIIDELPPCKKKAVLCYFGSVTSMGSLN) lie on the Vesicular side of the membrane. Asn-212 carries N-linked (GlcNAc...) asparagine glycosylation. Residues 213–233 (VSVIFGFLNMILWGGNAWFVY) traverse the membrane as a helical segment. The Cytoplasmic segment spans residues 234-259 (KETSLHSPSNTSAPHSQGGIPPPTGI).

It belongs to the synaptophysin/synaptobrevin family.

The protein localises to the cytoplasmic vesicle membrane. It localises to the melanosome. This chain is Synaptophysin-like protein 1 (SYPL1), found in Homo sapiens (Human).